Consider the following 475-residue polypeptide: Alpha,alpha-trehalose-phosphate synthase [UDP-forming] (475 aa).

D-glucose 6-phosphate-binding residues include tyrosine 93 and aspartate 147. Residues arginine 285 and lysine 290 each coordinate UDP. Residues arginine 285 and lysine 290 each contribute to the UDP-alpha-D-glucose site. Arginine 323 is a binding site for D-glucose 6-phosphate. Residue 384 to 392 (DGMNLVSYE) coordinates UDP-alpha-D-glucose. Position 388 to 392 (388 to 392 (LVSYE)) interacts with UDP.

It belongs to the glycosyltransferase 20 family.

It catalyses the reaction D-glucose 6-phosphate + UDP-alpha-D-glucose = alpha,alpha-trehalose 6-phosphate + UDP + H(+). It functions in the pathway carbohydrate biosynthesis. In terms of biological role, synthase catalytic subunit of the trehalose synthase complex that catalyzes the production of trehalose from glucose-6-phosphate and UDP-alpha-D-glucose in a two step process. The sequence is that of Alpha,alpha-trehalose-phosphate synthase [UDP-forming] from Pichia angusta (Yeast).